The primary structure comprises 199 residues: MTKVKICGLSTKEAVETAVSAGADYIGFVFAPSKRQVTLEEAAELAKLIPADVKKVGVFVSPSRVELLEAIDKVGLDLVQVHGQVAADLFENLPCASIQAVQVDGNGHVPNSQADYLLFDAPVAGSGQSFDWGQLDTTGLAQPFFIAGGLNEDNVVKAIQHFTPYAVDVSSGVETDGQKNHEKIRRFIERVKHGISGTK.

Belongs to the TrpF family.

It catalyses the reaction N-(5-phospho-beta-D-ribosyl)anthranilate = 1-(2-carboxyphenylamino)-1-deoxy-D-ribulose 5-phosphate. It participates in amino-acid biosynthesis; L-tryptophan biosynthesis; L-tryptophan from chorismate: step 3/5. The polypeptide is N-(5'-phosphoribosyl)anthranilate isomerase (Streptococcus pneumoniae (strain ATCC 700669 / Spain 23F-1)).